The following is a 162-amino-acid chain: 2-C-methyl-D-erythritol 2,4-cyclodiphosphate synthase (162 aa).

A divalent metal cation contacts are provided by D10 and H12. 4-CDP-2-C-methyl-D-erythritol 2-phosphate-binding positions include 10–12 (DVH) and 36–37 (HS). A divalent metal cation is bound at residue H44. 4-CDP-2-C-methyl-D-erythritol 2-phosphate-binding positions include 58–60 (DIG), 63–67 (FPDTD), 102–108 (AQAPRMA), 134–137 (TTSE), F141, and R144.

Belongs to the IspF family. In terms of assembly, homotrimer. It depends on a divalent metal cation as a cofactor.

It carries out the reaction 4-CDP-2-C-methyl-D-erythritol 2-phosphate = 2-C-methyl-D-erythritol 2,4-cyclic diphosphate + CMP. Its pathway is isoprenoid biosynthesis; isopentenyl diphosphate biosynthesis via DXP pathway; isopentenyl diphosphate from 1-deoxy-D-xylulose 5-phosphate: step 4/6. In terms of biological role, involved in the biosynthesis of isopentenyl diphosphate (IPP) and dimethylallyl diphosphate (DMAPP), two major building blocks of isoprenoid compounds. Catalyzes the conversion of 4-diphosphocytidyl-2-C-methyl-D-erythritol 2-phosphate (CDP-ME2P) to 2-C-methyl-D-erythritol 2,4-cyclodiphosphate (ME-CPP) with a corresponding release of cytidine 5-monophosphate (CMP). The polypeptide is 2-C-methyl-D-erythritol 2,4-cyclodiphosphate synthase (Chromohalobacter salexigens (strain ATCC BAA-138 / DSM 3043 / CIP 106854 / NCIMB 13768 / 1H11)).